A 398-amino-acid chain; its full sequence is Serpin-Z1C (398 aa).

The segment at 343-367 is RCL; it reads GTEAAASTAIKMALLQARPPSVMDF.

This sequence belongs to the serpin family.

Functionally, inhibits chymotrypsin and cathepsin G in vitro. This is Serpin-Z1C from Triticum aestivum (Wheat).